The chain runs to 263 residues: 4-hydroxy-tetrahydrodipicolinate reductase (263 aa).

NAD(+) contacts are provided by residues 8–13 (GACGRM), D34, 99–101 (GTT), and 125–128 (SPNY). H157 functions as the Proton donor/acceptor in the catalytic mechanism. Position 158 (H158) interacts with (S)-2,3,4,5-tetrahydrodipicolinate. Catalysis depends on K161, which acts as the Proton donor. Residue 167–168 (GT) participates in (S)-2,3,4,5-tetrahydrodipicolinate binding.

The protein belongs to the DapB family.

The protein resides in the cytoplasm. It carries out the reaction (S)-2,3,4,5-tetrahydrodipicolinate + NAD(+) + H2O = (2S,4S)-4-hydroxy-2,3,4,5-tetrahydrodipicolinate + NADH + H(+). The catalysed reaction is (S)-2,3,4,5-tetrahydrodipicolinate + NADP(+) + H2O = (2S,4S)-4-hydroxy-2,3,4,5-tetrahydrodipicolinate + NADPH + H(+). It participates in amino-acid biosynthesis; L-lysine biosynthesis via DAP pathway; (S)-tetrahydrodipicolinate from L-aspartate: step 4/4. In terms of biological role, catalyzes the conversion of 4-hydroxy-tetrahydrodipicolinate (HTPA) to tetrahydrodipicolinate. In Methanosarcina acetivorans (strain ATCC 35395 / DSM 2834 / JCM 12185 / C2A), this protein is 4-hydroxy-tetrahydrodipicolinate reductase.